Here is a 278-residue protein sequence, read N- to C-terminus: Pyrroline-5-carboxylate reductase 2 (278 aa).

It belongs to the pyrroline-5-carboxylate reductase family.

The protein resides in the cytoplasm. The catalysed reaction is L-proline + NADP(+) = (S)-1-pyrroline-5-carboxylate + NADPH + 2 H(+). It catalyses the reaction L-proline + NAD(+) = (S)-1-pyrroline-5-carboxylate + NADH + 2 H(+). It participates in amino-acid biosynthesis; L-proline biosynthesis; L-proline from L-glutamate 5-semialdehyde: step 1/1. Its function is as follows. Catalyzes the reduction of 1-pyrroline-5-carboxylate (PCA) to L-proline. The polypeptide is Pyrroline-5-carboxylate reductase 2 (proI) (Bacillus subtilis (strain 168)).